Here is a 1007-residue protein sequence, read N- to C-terminus: Kinesin-like protein KIN-7D, chloroplastic (1007 aa).

The N-terminal 53 residues, 1-53 (MATRPASRQRRASSAAAAVAVVRSSPQPQQQQQQQLPIPQSGSPTSTTTTTTS), are a transit peptide targeting the chloroplast. The span at 1-55 (MATRPASRQRRASSAAAAVAVVRSSPQPQQQQQQQLPIPQSGSPTSTTTTTTSSS) shows a compositional bias: low complexity. The disordered stretch occupies residues 1–79 (MATRPASRQR…LFAGLDEDPA (79 aa)). The region spanning 83-402 (NVTVTVRFRP…LKFAHRAKRI (320 aa)) is the Kinesin motor domain. 163–170 (GVTSSGKT) contributes to the ATP binding site. Positions 403–495 (EVQASQNKII…QRLTKLILVS (93 aa)) form a coiled coil. The interval 579–607 (ILTSSEGDKSSLTKSTAPSTPIGESVNFP) is disordered. Coiled-coil stretches lie at residues 687–716 (NNEKIQMEMKKVNDEIKGKKHQIASLERQI), 754–791 (AADNRVIQDQLNEKTTECMELQEEVAHLKEQLYQTLQA), and 836–907 (SVEI…SVRS). The interval 901-941 (ELASVRSPTPRRANSGLRGTRRDSISRRHEPAPRRDNNAGY) is disordered. The segment covering 920-941 (TRRDSISRRHEPAPRRDNNAGY) has biased composition (basic and acidic residues). Positions 942-982 (EREKALEAVLMEKEQKEAELQRRIEESKQKEAFLESELANM) form a coiled coil.

This sequence belongs to the TRAFAC class myosin-kinesin ATPase superfamily. Kinesin family. KIN-7 subfamily. As to quaternary structure, binds microtubules. Homodimer. Requires Mg(2+) as cofactor.

The protein localises to the plastid. It localises to the chloroplast. Probable minus end-directed motor protein with a microtubule-enhanced ATPase activity. Binds ATP/ADP in vitro. Retains total enzymatic activity even after the removal of the ADP bound in the active site. The sequence is that of Kinesin-like protein KIN-7D, chloroplastic from Oryza sativa subsp. japonica (Rice).